A 971-amino-acid polypeptide reads, in one-letter code: UPF0182 protein RER_22310 (971 aa).

7 helical membrane-spanning segments follow: residues 16–36 (ILLV…RLIG), 61–81 (FVLF…AMLL), 112–132 (LFGV…AQAN), 172–192 (WLFV…YVFG), 209–229 (VQLA…YWFD), 257–277 (AKLI…ASIF), and 286–306 (MAVA…PMIV). Residues 890-927 (GSAATVTQPAPDPDTGAQPETPTTPTAPAPPASSDDVT) are disordered.

This sequence belongs to the UPF0182 family.

It localises to the cell membrane. The protein is UPF0182 protein RER_22310 of Rhodococcus erythropolis (strain PR4 / NBRC 100887).